The following is a 100-amino-acid chain: Large ribosomal subunit protein uL23 (100 aa).

It belongs to the universal ribosomal protein uL23 family. As to quaternary structure, part of the 50S ribosomal subunit. Contacts protein L29, and trigger factor when it is bound to the ribosome.

Functionally, one of the early assembly proteins it binds 23S rRNA. One of the proteins that surrounds the polypeptide exit tunnel on the outside of the ribosome. Forms the main docking site for trigger factor binding to the ribosome. This Aggregatibacter actinomycetemcomitans (Actinobacillus actinomycetemcomitans) protein is Large ribosomal subunit protein uL23.